The chain runs to 154 residues: Large ribosomal subunit protein uL30 (154 aa).

It belongs to the universal ribosomal protein uL30 family. In terms of assembly, part of the 50S ribosomal subunit.

The chain is Large ribosomal subunit protein uL30 from Methanococcus maripaludis (strain DSM 14266 / JCM 13030 / NBRC 101832 / S2 / LL).